The following is a 632-amino-acid chain: tRNA uridine 5-carboxymethylaminomethyl modification enzyme MnmG (632 aa).

FAD is bound by residues 13–18 (GGGHAG), Val125, and Ser180. Position 273 to 287 (273 to 287 (GPRYCPSIEDKINRF)) interacts with NAD(+). Gln370 contacts FAD.

This sequence belongs to the MnmG family. As to quaternary structure, homodimer. Heterotetramer of two MnmE and two MnmG subunits. Requires FAD as cofactor.

It is found in the cytoplasm. NAD-binding protein involved in the addition of a carboxymethylaminomethyl (cmnm) group at the wobble position (U34) of certain tRNAs, forming tRNA-cmnm(5)s(2)U34. This Shewanella sediminis (strain HAW-EB3) protein is tRNA uridine 5-carboxymethylaminomethyl modification enzyme MnmG.